The primary structure comprises 194 residues: Large ribosomal subunit protein eL15 (194 aa).

Residues 158 to 194 form a disordered region; sequence ANRGLTSAGKKGRGLMYKGKGAEKARPGVRANGKKTK.

The protein belongs to the eukaryotic ribosomal protein eL15 family.

This is Large ribosomal subunit protein eL15 from Methanococcus maripaludis (strain DSM 14266 / JCM 13030 / NBRC 101832 / S2 / LL).